The following is a 160-amino-acid chain: Putative 4-hydroxy-4-methyl-2-oxoglutarate aldolase (160 aa).

Substrate-binding positions include 76 to 79 and Arg-98; that span reads GGNL. Asp-99 contributes to the a divalent metal cation binding site.

This sequence belongs to the class II aldolase/RraA-like family. As to quaternary structure, homotrimer. The cofactor is a divalent metal cation.

The catalysed reaction is 4-hydroxy-4-methyl-2-oxoglutarate = 2 pyruvate. The enzyme catalyses oxaloacetate + H(+) = pyruvate + CO2. Functionally, catalyzes the aldol cleavage of 4-hydroxy-4-methyl-2-oxoglutarate (HMG) into 2 molecules of pyruvate. Also contains a secondary oxaloacetate (OAA) decarboxylase activity due to the common pyruvate enolate transition state formed following C-C bond cleavage in the retro-aldol and decarboxylation reactions. This is Putative 4-hydroxy-4-methyl-2-oxoglutarate aldolase from Deinococcus radiodurans (strain ATCC 13939 / DSM 20539 / JCM 16871 / CCUG 27074 / LMG 4051 / NBRC 15346 / NCIMB 9279 / VKM B-1422 / R1).